Here is a 405-residue protein sequence, read N- to C-terminus: Phosphoglycerate kinase (405 aa).

Residues 24–26, Arg40, 63–66, Arg122, and Arg162 each bind substrate; these read DFN and HLGR. ATP-binding positions include Lys212, Glu331, and 361–364; that span reads GGDS.

It belongs to the phosphoglycerate kinase family. As to quaternary structure, monomer.

It localises to the cytoplasm. The enzyme catalyses (2R)-3-phosphoglycerate + ATP = (2R)-3-phospho-glyceroyl phosphate + ADP. The protein operates within carbohydrate degradation; glycolysis; pyruvate from D-glyceraldehyde 3-phosphate: step 2/5. In Corynebacterium glutamicum (strain ATCC 13032 / DSM 20300 / JCM 1318 / BCRC 11384 / CCUG 27702 / LMG 3730 / NBRC 12168 / NCIMB 10025 / NRRL B-2784 / 534), this protein is Phosphoglycerate kinase (pgk).